The chain runs to 347 residues: Probable dual-specificity RNA methyltransferase RlmN (347 aa).

Glu-90 acts as the Proton acceptor in catalysis. Positions 96-326 constitute a Radical SAM core domain; that stretch reads YKHGNSICIS…VTVRREMGSD (231 aa). Cys-103 and Cys-331 are joined by a disulfide. 3 residues coordinate [4Fe-4S] cluster: Cys-110, Cys-114, and Cys-117. S-adenosyl-L-methionine contacts are provided by residues 157 to 158, Ser-189, 212 to 214, and Asn-288; these read GE and SLH. Cys-331 serves as the catalytic S-methylcysteine intermediate.

It belongs to the radical SAM superfamily. RlmN family. The cofactor is [4Fe-4S] cluster.

It localises to the cytoplasm. The catalysed reaction is adenosine(2503) in 23S rRNA + 2 reduced [2Fe-2S]-[ferredoxin] + 2 S-adenosyl-L-methionine = 2-methyladenosine(2503) in 23S rRNA + 5'-deoxyadenosine + L-methionine + 2 oxidized [2Fe-2S]-[ferredoxin] + S-adenosyl-L-homocysteine. It catalyses the reaction adenosine(37) in tRNA + 2 reduced [2Fe-2S]-[ferredoxin] + 2 S-adenosyl-L-methionine = 2-methyladenosine(37) in tRNA + 5'-deoxyadenosine + L-methionine + 2 oxidized [2Fe-2S]-[ferredoxin] + S-adenosyl-L-homocysteine. Its function is as follows. Specifically methylates position 2 of adenine 2503 in 23S rRNA and position 2 of adenine 37 in tRNAs. The sequence is that of Probable dual-specificity RNA methyltransferase RlmN from Clostridium botulinum (strain Alaska E43 / Type E3).